A 1314-amino-acid chain; its full sequence is MDEELLLTRILAGIEGGDDESDYHELVTDLKSLLDTDDDEILNRFYGSLSSMASSFLRCISAAMDSPVESGRLAILASDAYLSLLLSTNCPVFTFFSPIAFLSLLGSIRRYLKRRDDSAGQGSNSQREKGNKKKRGRGKRNLGYEDGEETEEGGFDAKLMFIVLEKLGSVLSFVHLDRFPDSLKSLVQTVSEIPLLALEHSGVLNYDRLMEMCGKILGGVLNSDHGDMALTAAEISKSLTPLLLMGKHQARSFALGFVSRKLMSLAKDNPELKKVVSNLPKFLVHKAPEKAEPRGFAVEAVLEIVKAMEVEGQSEFVDFVMKMCQGKSNFRVLAVDIIPLLISSLGNPLGDISSENGLKDSWGLGCIDALVQRCSDTSALIRARALSNLAQVVEFLSGDERSRSILKQALGFNGETSEGKGAVTDLLKKRCVDEKAAVRRAALLLVTKLTSLMGGCFDGSILKTMGTSCSDPLISIRKAAVSAISEAFRICTDEIVTTEWLHSVPRMIMDNETSIQEECENVFHELVLERILRAGNVLSPDSASLPNNRNTTSKDLDRDIEALFPEGVLVLLRELCNSEVSPWVTKICGSLGKKKRLKPRVALALQCIIKESESLWLSRSMPINRWTAPAGAWFLLSEVSVYLSKSVEWEFLHHHWQLLDKNDVQGLDEQGDEQGVECNSSTWAGDRVCLLQTISNVSLQLPAEPAADLADNLLKKIENFNLHSAEVDAHVKALKTLCKKKASTSEEADMLVKKWVEQVSLKASKVTEKYIEGVSSHNHSFVTPATLGSRRSKRLDTVSKKLSKAVTAVYTIGSCVIIYPSADTTKIVPFLHTVITSGNSDSKLKNKLPQANVCLKQKAPLLYSQSWLTMAKMCLADGKLAKRYLPLFAQELEKSDCAALRNNLVVAMTDFCVHYTAMIECYIPKITKRLRDPCEVVRRQTFILLSRLLQRDYVKWRGVLFLRFLLSLVDESEKIRRLADFLFGSILKVKAPLLAYNSFVEAIYVLNDCHAHTGHSNPDSKQSRTKDQVFSIRGNDERARSKRMQIYVTLLKQMAPEHLLATFAKLCAEILAAASDGMLNIEDVTGQSVLQDAFQILACKEIRLSVSRGASSETADIEEEGGDAATAKGRAITHAVRKGLIQNTIPIFIELKRLLESKNSPLTGSLMDCLRVLLKDYKNEIEEMLVADKQLQKELVYDMQKHEAAKARSMANQGVACGTSHRNGEPEASAASEENVRDSGLESRVVSAAADVVAAKAARSVLREVNGGAATPPLSAMSVPKLRSSRGVSQSGRPSADVLESLRRRPTFMSDDES.

HEAT repeat units lie at residues 20–58, 98–136, 184–222, 231–267, 269–310, 331–360, 361–398, 417–455, 457–493, and 494–532; these read ESDY…SFLR, PIAF…KKRG, KSLV…GVLN, TAAE…SLAK, NPEL…AMEV, RVLA…GLKD, SWGL…FLSG, SEGK…LMGG, FDGS…ICTD, and EIVT…ERIL. Residues 116-150 form a disordered region; that stretch reads DDSAGQGSNSQREKGNKKKRGRGKRNLGYEDGEET. Residues 130–140 are compositionally biased toward basic residues; it reads GNKKKRGRGKR. Positions 789 to 796 match the Nuclear localization signal motif; the sequence is SRRSKRLD. HEAT repeat units lie at residues 821-859, 878-916, 917-954, 956-992, 1053-1091, and 1138-1179; these read SADT…KQKA, GKLA…VHYT, AMIE…RDYV, WRGV…VKAP, QMAP…SVLQ, and KGLI…DYKN. Disordered stretches follow at residues 1210–1237 and 1265–1314; these read MANQ…ENVR and VNGG…DDES.

As to quaternary structure, component of the condensin-2 complex. In terms of tissue distribution, present in buds.

It is found in the nucleus. The protein resides in the chromosome. In terms of biological role, regulatory subunit of the condensin-2 complex, a complex which establishes mitotic chromosome architecture and is involved in physical rigidity of the chromatid axis. May promote the resolution of double-strand DNA catenanes (intertwines) between sister chromatids. Required for plant vigor, fertility, chromatin condensation and sister chromatid cohesion both during mitosis and meiosis. Necessary to maintain normal structural integrity of the meiotic chromosomes during the two nuclear divisions of gametogenesis, especially to prevent interchromosome connections at metaphase I. Seems also involved in crossover formation during meiotic prophase I. Prevents centromeric and pericentromeric heterochromatin repeats association. The polypeptide is Condensin-2 complex subunit CAP-D3 (Arabidopsis thaliana (Mouse-ear cress)).